Reading from the N-terminus, the 188-residue chain is Elongation factor P (188 aa).

The segment at 139 to 163 (PVTKGQTASSSYKPATLSNGVRTQV) is disordered. The segment covering 142-160 (KGQTASSSYKPATLSNGVR) has biased composition (polar residues).

This sequence belongs to the elongation factor P family.

It localises to the cytoplasm. The protein operates within protein biosynthesis; polypeptide chain elongation. Its function is as follows. Involved in peptide bond synthesis. Stimulates efficient translation and peptide-bond synthesis on native or reconstituted 70S ribosomes in vitro. Probably functions indirectly by altering the affinity of the ribosome for aminoacyl-tRNA, thus increasing their reactivity as acceptors for peptidyl transferase. This Methylobacterium nodulans (strain LMG 21967 / CNCM I-2342 / ORS 2060) protein is Elongation factor P.